The sequence spans 141 residues: uncharacterized protein (141 aa).

Its subcellular location is the cytoplasm. This is an uncharacterized protein from Homo sapiens (Human).